The chain runs to 105 residues: Multidrug resistance protein EbrA (105 aa).

4 helical membrane-spanning segments follow: residues 2–22 (LVGY…AAML), 35–55 (ALVV…LNHI), 57–77 (LSLS…VIGV), and 84–104 (LNAK…LLNW).

This sequence belongs to the drug/metabolite transporter (DMT) superfamily. Small multidrug resistance (SMR) (TC 2.A.7.1) family. EbrA/EbrB subfamily. The efflux pump is composed of EbrA and EbrB.

The protein resides in the cell membrane. In terms of biological role, part of a multidrug efflux pump. Confers resistance to cationic lipophilic dyes such as ethidium bromide, acriflavine, pyronine Y and safranin O. The efflux is probably coupled to an influx of protons. In Bacillus atrophaeus, this protein is Multidrug resistance protein EbrA (ebrA).